Reading from the N-terminus, the 532-residue chain is Tegument protein UL21 (532 aa).

Positions 251-276 (SPSVSSAPPPSAPDASLPPPGLQEAA) are disordered. A compositionally biased stretch (pro residues) spans 257-276 (APPPSAPDASLPPPGLQEAA).

This sequence belongs to the alphaherpesvirinae UL21 protein family. In terms of assembly, interacts (via C-terminus) with UL16.

The protein localises to the virion tegument. Its subcellular location is the host cytoplasm. It localises to the host nucleus. Its function is as follows. May participate in DNA packaging/capsid maturation events. Promotes efficient incorporation of tegument proteins UL46, UL49, and US3 into virions. May also play a role in capsid transport to the trans-Golgi network (TGN). The chain is Tegument protein UL21 from Human herpesvirus 2 (strain HG52) (HHV-2).